The chain runs to 448 residues: T-box transcription factor TBX19 (448 aa).

Positions 45 to 218 form a DNA-binding region, T-box; it reads LEDAPLWQRF…YNPFAKAFLD (174 aa).

Its subcellular location is the nucleus. In terms of biological role, transcriptional regulator involved in developmental processes. Can activate POMC gene expression and repress the alpha glycoprotein subunit and thyroid-stimulating hormone beta promoters. In Homo sapiens (Human), this protein is T-box transcription factor TBX19.